The primary structure comprises 408 residues: Probable acyl-CoA dehydrogenase 6 (408 aa).

Glu-265 (proton acceptor) is an active-site residue.

This sequence belongs to the acyl-CoA dehydrogenase family. In terms of assembly, homotetramer. It depends on FAD as a cofactor.

The catalysed reaction is 3-methylbutanoyl-CoA + oxidized [electron-transfer flavoprotein] + H(+) = 3-methylbut-2-enoyl-CoA + reduced [electron-transfer flavoprotein]. Its pathway is amino-acid degradation; L-leucine degradation; (S)-3-hydroxy-3-methylglutaryl-CoA from 3-isovaleryl-CoA: step 1/3. The protein is Probable acyl-CoA dehydrogenase 6 (acdh-6) of Caenorhabditis elegans.